A 156-amino-acid chain; its full sequence is 6,7-dimethyl-8-ribityllumazine synthase (156 aa).

5-amino-6-(D-ribitylamino)uracil-binding positions include F23, 57-59 (SWE), and 81-83 (AVV). Residue 86 to 87 (ET) participates in (2S)-2-hydroxy-3-oxobutyl phosphate binding. H89 serves as the catalytic Proton donor. F114 lines the 5-amino-6-(D-ribitylamino)uracil pocket. R128 is a binding site for (2S)-2-hydroxy-3-oxobutyl phosphate.

The protein belongs to the DMRL synthase family.

It catalyses the reaction (2S)-2-hydroxy-3-oxobutyl phosphate + 5-amino-6-(D-ribitylamino)uracil = 6,7-dimethyl-8-(1-D-ribityl)lumazine + phosphate + 2 H2O + H(+). It functions in the pathway cofactor biosynthesis; riboflavin biosynthesis; riboflavin from 2-hydroxy-3-oxobutyl phosphate and 5-amino-6-(D-ribitylamino)uracil: step 1/2. Catalyzes the formation of 6,7-dimethyl-8-ribityllumazine by condensation of 5-amino-6-(D-ribitylamino)uracil with 3,4-dihydroxy-2-butanone 4-phosphate. This is the penultimate step in the biosynthesis of riboflavin. This is 6,7-dimethyl-8-ribityllumazine synthase from Salinibacter ruber (strain DSM 13855 / M31).